The following is a 217-amino-acid chain: Somatotropin (217 aa).

The first 27 residues, 1 to 27, serve as a signal peptide directing secretion; it reads MMAAGPRASLLLAFALLCLPWTQEVGA. Residue His46 coordinates Zn(2+). An intrachain disulfide couples Cys79 to Cys190. Ser132 bears the Phosphoserine mark. Residue Glu199 participates in Zn(2+) binding. The cysteines at positions 207 and 215 are disulfide-linked.

It belongs to the somatotropin/prolactin family.

The protein resides in the secreted. In terms of biological role, plays an important role in growth control. Its major role in stimulating body growth is to stimulate the liver and other tissues to secrete IGF1. It stimulates both the differentiation and proliferation of myoblasts. It also stimulates amino acid uptake and protein synthesis in muscle and other tissues. This is Somatotropin (GH1) from Cervus elaphus (Red deer).